A 444-amino-acid chain; its full sequence is Trigger factor (444 aa).

The region spanning 166-251 (GDQVVIDFEG…VHAVKAPKPA (86 aa)) is the PPIase FKBP-type domain.

It belongs to the FKBP-type PPIase family. Tig subfamily.

It is found in the cytoplasm. It carries out the reaction [protein]-peptidylproline (omega=180) = [protein]-peptidylproline (omega=0). In terms of biological role, involved in protein export. Acts as a chaperone by maintaining the newly synthesized protein in an open conformation. Functions as a peptidyl-prolyl cis-trans isomerase. The chain is Trigger factor (tig) from Rhodobacter capsulatus (strain ATCC BAA-309 / NBRC 16581 / SB1003).